We begin with the raw amino-acid sequence, 374 residues long: Eukaryotic translation initiation factor 3 subunit M (374 aa).

S2 carries the post-translational modification N-acetylserine. A phosphoserine mark is found at S2 and S152. The 160-residue stretch at 180 to 339 folds into the PCI domain; that stretch reads AASKVMVELL…RKVVVSHSTH (160 aa). K254 carries the N6-acetyllysine modification. S367 carries the phosphoserine modification.

This sequence belongs to the eIF-3 subunit M family. As to quaternary structure, component of the eukaryotic translation initiation factor 3 (eIF-3) complex, which is composed of 13 subunits: EIF3A, EIF3B, EIF3C, EIF3D, EIF3E, EIF3F, EIF3G, EIF3H, EIF3I, EIF3J, EIF3K, EIF3L and EIF3M. The eIF-3 complex appears to include 3 stable modules: module A is composed of EIF3A, EIF3B, EIF3G and EIF3I; module B is composed of EIF3F, EIF3H, and EIF3M; and module C is composed of EIF3C, EIF3D, EIF3E, EIF3K and EIF3L. EIF3C of module C binds EIF3B of module A and EIF3H of module B, thereby linking the three modules. EIF3J is a labile subunit that binds to the eIF-3 complex via EIF3B. The eIF-3 complex interacts with RPS6KB1 under conditions of nutrient depletion. Mitogenic stimulation leads to binding and activation of a complex composed of MTOR and RPTOR, leading to phosphorylation and release of RPS6KB1 and binding of EIF4B to eIF-3.

The protein resides in the cytoplasm. In terms of biological role, component of the eukaryotic translation initiation factor 3 (eIF-3) complex, which is required for several steps in the initiation of protein synthesis. The eIF-3 complex associates with the 40S ribosome and facilitates the recruitment of eIF-1, eIF-1A, eIF-2:GTP:methionyl-tRNAi and eIF-5 to form the 43S pre-initiation complex (43S PIC). The eIF-3 complex stimulates mRNA recruitment to the 43S PIC and scanning of the mRNA for AUG recognition. The eIF-3 complex is also required for disassembly and recycling of post-termination ribosomal complexes and subsequently prevents premature joining of the 40S and 60S ribosomal subunits prior to initiation. The eIF-3 complex specifically targets and initiates translation of a subset of mRNAs involved in cell proliferation, including cell cycling, differentiation and apoptosis, and uses different modes of RNA stem-loop binding to exert either translational activation or repression. This is Eukaryotic translation initiation factor 3 subunit M from Pongo abelii (Sumatran orangutan).